We begin with the raw amino-acid sequence, 197 residues long: Casparian strip membrane protein 5 (197 aa).

The Cytoplasmic segment spans residues 1–34; the sequence is MSTTIDMPGSSKAAKAGKPVLVTTPSRPGGWKKG. The helical transmembrane segment at 35–55 threads the bilayer; the sequence is VAIMDFILRLGAIAAALGAAA. At 56 to 84 the chain is on the extracellular side; it reads TMGLSDQTLPFFTQFFQFEASYDSFTTFQ. A helical membrane pass occupies residues 85–105; sequence FFVITMALVAGYLVLSLPLSI. Over 106–117 the chain is Cytoplasmic; sequence VAVVRPHAAGPR. Residues 118–138 traverse the membrane as a helical segment; that stretch reads LFLIILDTVFLTLATASGASA. Residues 139–171 lie on the Extracellular side of the membrane; sequence ASIVYLAHNGNQDTNWIAICNQFGDFCAQTSGA. The helical transmembrane segment at 172–192 threads the bilayer; it reads VVSSLVAVLVFVLLIVMSALV. Residues 193 to 197 lie on the Cytoplasmic side of the membrane; it reads LGKKH.

This sequence belongs to the Casparian strip membrane proteins (CASP) family. Homodimer and heterodimers.

It is found in the cell membrane. In terms of biological role, regulates membrane-cell wall junctions and localized cell wall deposition. Required for establishment of the Casparian strip membrane domain (CSD) and the subsequent formation of Casparian strips, a cell wall modification of the root endodermis that determines an apoplastic barrier between the intraorganismal apoplasm and the extraorganismal apoplasm and prevents lateral diffusion. The protein is Casparian strip membrane protein 5 of Lotus japonicus (Lotus corniculatus var. japonicus).